The following is a 340-amino-acid chain: Guanine nucleotide-binding protein subunit beta-4 (340 aa).

Ser-2 is subject to N-acetylserine. Ser-2 bears the Phosphoserine mark. WD repeat units lie at residues 53–92 (GHLAKIYAMHWGYDSRLLVSASQDGKLIIWDSYTTNKMHA), 95–134 (LRSSWVMTCAYAPSGNYVACGGLDNICSIYNLKTREGNVR), 141–179 (GHTGYLSCCRFLDDGQIITSSGDTTCALWDIETGQQTTT), 182–221 (GHSGDVMSLSLSPDLKTFVSGACDASSKLWDIRDGMCRQS), and 224–263 (GHISDINAVSFFPSGYAFATGSDDATCRLFDLRADQELLL). His-266 carries the phosphohistidine modification. 2 WD repeats span residues 268–307 (NIICGITSVAFSKSGRLLLAGYDDFNCSVWDALKGGRAGV) and 310–339 (GHDNRVSCLGVTDDGMAVATGSWDSFLRIW).

This sequence belongs to the WD repeat G protein beta family. G proteins are composed of 3 units, alpha, beta and gamma. Widely expressed in the brain. Highest levels found in the hippocampus and layers v and vi of the neocortex.

Functionally, guanine nucleotide-binding proteins (G proteins) are involved as a modulator or transducer in various transmembrane signaling systems. The beta and gamma chains are required for the GTPase activity, for replacement of GDP by GTP, and for G protein-effector interaction. The chain is Guanine nucleotide-binding protein subunit beta-4 (Gnb4) from Rattus norvegicus (Rat).